Consider the following 411-residue polypeptide: Immunity-related GTPase family M protein (411 aa).

Positions 1–21 (MKPSHKSCEAAPLLPKMPETS) are disordered. Residues 77 to 253 (IPVSIFVTGD…PELRNTLQTD (177 aa)) form the IRG-type G domain. Residues 86-93 (DSGNGMSS), 111-115 (TGVVR), and 193-195 (KLD) each bind GTP. The residue at position 204 (Ser204) is a Phosphoserine. Residue 234–236 (SNL) participates in GTP binding. Lys272 participates in a covalent cross-link: Glycyl lysine isopeptide (Lys-Gly) (interchain with G-Cter in ubiquitin). The segment at 352 to 376 (KLRLMTCTTVNALFCLFKFLPCLCH) is alpha-K amphipathic helix.

This sequence belongs to the TRAFAC class dynamin-like GTPase superfamily. IRG family. As to quaternary structure, interacts with ULK1; promoting the coassembly of ULK1 and BECN1. Interacts with BECN1; enhancing BECN1-interacting partners and influencing the composition of the BECN1 complex. Interacts with ATG16L1. Interacts with NOD2; promoting Irgm 'Lys-63'-linked polyubiquitination, which is required for interactions with the core autophagy factors. Interacts with STX17; promoting STX17 recruitment to autophagosomes. Interacts with ATG8 proteins (GABARAP, GABARAPL1, GABARAPL2, MAP1LC3A, MAP1LC3B and MAP1LC3C); promoting STX17 recruitment to autophagosomes. Interacts with TFEB; promoting association between TFEB and PPP3CB and TFEB dephosphorylation. Interacts with PPP3CB; promoting association between TFEB and PPP3CB and TFEB dephosphorylation. Interacts with NLRP3; preventing NLRP3 inflammasome assembly and promoting SQSTM1/p62-dependent autophagic degradation of NLRP3. Interacts with CGAS; promoting SQSTM1/p62-dependent autophagic degradation of CGAS. Interacts with RIGI/RIG-I; promoting SQSTM1/p62-dependent autophagic degradation of RIGI/RIG-I. Interacts with NOD1; promoting SQSTM1/p62-dependent autophagic degradation of RIGI/RIG-I. Interacts with NOD2; promoting SQSTM1/p62-dependent autophagic degradation of RIGI/RIG-I. Interacts with RIPK2; promoting SQSTM1/p62-dependent autophagic degradation of RIGI/RIG-I. Interacts with PIK3CA. Post-translationally, palmitoylated on C-terminal Cys residues. Palmitoylation, together with the alpha-K amphipathic helix, which binds phosphatidylinositol, mediate binding to membranes. Ubiquitinated via 'Lys-63'-linked polyubiquitination in a NOD2-dependent process. 'Lys-63'-linked polyubiquitination is required for interactions with the core autophagy factors. Ubiquitination at Lys-272 by the DCX(WDR77) complex, also named CLR4(WDR77) complex, in intestinal cells, leading to its degradation by the proteasome.

Its subcellular location is the golgi apparatus membrane. The protein localises to the cell membrane. It is found in the cytoplasmic vesicle. The protein resides in the phagosome membrane. It localises to the autophagosome membrane. Its subcellular location is the lysosome membrane. The protein localises to the late endosome membrane. It is found in the mitochondrion membrane. The protein resides in the cell projection. It localises to the phagocytic cup. It carries out the reaction GTP + H2O = GDP + phosphate + H(+). In terms of biological role, immunity-related GTPase that plays important roles in innate immunity and inflammatory response. Acts as a dynamin-like protein that binds to intracellular membranes and promotes remodeling and trafficking of those membranes. Required for clearance of acute protozoan and bacterial infections by interacting with autophagy and lysosome regulatory proteins, thereby promoting the fusion of phagosomes with lysosomes for efficient degradation of cargo including microbes. Regulates selective autophagy, including xenophagy and mitophagy, both directly and indirectly. Directly regulates autophagy by acting as a molecular adapter that promotes the coassembly of the core autophagy machinery to mediate antimicrobial defense: Irgm (1) activates AMPK, which in turn phosphorylates ULK1 and BECN1 to induce autophagy, (2) promotes the coassembly of ULK1 and BECN1, enhancing BECN1-interacting partners and (3) influences the composition of the BECN1 complex, by competing with the negative regulators BCL2 and RUBCN, to trigger autophagy. Also activates autophagy by promoting recruitment of STX17 to autophagosomes. In collaboration with ATG8 proteins, regulate lysosomal biogenesis, a fundamental process for any autophagic pathway, by promoting TFEB dephosphorylation. Also modulates autophagy by assisting with autophagosome formation and preventing lysosomal deacidification. Regulates autophagy by affecting mitochondrial fusion and fission. Also involved in M1 macrophage activation for the production of proinflammatory cytokines. While activating autophagy, acts as a key negative regulator of the inflammatory and interferon responses both by (1) promoting mitophagy and (2) mediating autophagy-dependent degradation of effectors of the inflammatory response. Promotes degradation of damaged and IFNG/IFN-gamma-stressed mitochondria via mitophagy, preventing cytosolic release of ligands that activate inflammation. Negatively regulates interferon-signaling in hematopoietic stem cells, preserving hematopoietic stem cell number and function. Promotes expansion of activated CD4(+) T-cells by inhibiting IFNG/IFN-gamma signaling, thereby preventing Ifng-mediated cell death of CD4(+) T-cells. Acts as a suppressor of inflammation by promoting recruitment of inflammation effectors, such as CGAS, RIGI/RIG-I and NLRP3, to autophagosome membranes, leading to their SQSTM1/p62-dependent autophagic degradation. Also directly inhibits assembly of the NLRP3 inflammasome by preventing the association between NLRP3 and PYCARD. Acts as a negative regulator of antiviral innate immune response by suppressing the RIPK2-dependent pro-inflammatory response: mediates recruitment of RIPosomes, composed of RIPK2 and NOD1 or NOD2, to autophagosome membranes, promoting their SQSTM1/p62-dependent autophagic degradation. The chain is Immunity-related GTPase family M protein from Rattus norvegicus (Rat).